A 1846-amino-acid chain; its full sequence is Brefeldin A-inhibited guanine nucleotide-exchange protein 1 (1846 aa).

The DCB; DCB:DCB domain and DCB:HUS domain interaction stretch occupies residues 2 to 224; sequence YEGKKTKNMF…QEAKQMERER (223 aa). Serine 52 is modified (phosphoserine). Disordered stretches follow at residues 216-249, 264-304, and 347-410; these read EAKQMERERHRQQQHLLQSPVSHHEPESPHLRYL, DLEP…ATAA, and ISAS…SPGA. Residues 264–277 show a composition bias toward basic and acidic residues; the sequence is DLEPQTHDVDKSLQ. A phosphoserine mark is found at serine 286, serine 289, and serine 290. Composition is skewed to polar residues over residues 348 to 357 and 391 to 406; these read SASTEGNTGT and SVSSNDTQESGNSSGP. Residues serine 394 and serine 407 each carry the phosphoserine modification. Positions 554-574 are HUS; DCB:HUS domain interaction; that stretch reads ADAQSVVDIYVNYDCDLNAAN. A disordered region spans residues 631 to 684; the sequence is PNSQTTLGQEKPSEQEISEVKHPETINRYGSLNSLESTSSSGIGSYSTQMSGTD. Residues 641-655 are compositionally biased toward basic and acidic residues; sequence KPSEQEISEVKHPET. Low complexity predominate over residues 661-681; the sequence is SLNSLESTSSSGIGSYSTQMS. Residues 688 to 877 enclose the SEC7 domain; that stretch reads QFEVLKQQKE…SAIYNEIAGK (190 aa). Positions 708 to 712 match the Nuclear localization signal (NLS) motif; it reads KKPKR. A phosphoserine mark is found at serine 1076, serine 1563, and serine 1566.

In terms of assembly, homodimer. Interacts with ARFGEF2/BIG2; both proteins are probably part of the same or very similar macromolecular complexes. Interacts with FKBP2. Interacts with MYO9B. Interacts with PRKAR1A and PRKAR2A. Interacts with PPP1CC. Interacts with NCL, FBL, NUP62 and U3 small nucleolar RNA. Interacts with DPY30. Interacts with PDE3A. Interacts with KANK1. Interacts with TBC1D22A and TBC1D22B. Phosphorylated. In vitro phosphorylated by PKA reducing its GEF activity and dephosphorylated by phosphatase PP1.

Its subcellular location is the cytoplasm. It is found in the perinuclear region. The protein localises to the golgi apparatus. It localises to the trans-Golgi network. The protein resides in the nucleus. Its subcellular location is the nucleolus. It is found in the nucleus matrix. The protein localises to the membrane. With respect to regulation, inhibited by brefeldin A. Functionally, promotes guanine-nucleotide exchange on ARF1 and ARF3. Promotes the activation of ARF1/ARF3 through replacement of GDP with GTP. Involved in vesicular trafficking. Required for the maintenance of Golgi structure; the function may be independent of its GEF activity. Required for the maturation of integrin beta-1 in the Golgi. Involved in the establishment and persistence of cell polarity during directed cell movement in wound healing. Proposed to act as A kinase-anchoring protein (AKAP) and may mediate crosstalk between Arf and PKA pathways. Inhibits GAP activity of MYO9B probably through competitive RhoA binding. The function in the nucleus remains to be determined. This Mus musculus (Mouse) protein is Brefeldin A-inhibited guanine nucleotide-exchange protein 1 (Arfgef1).